Consider the following 352-residue polypeptide: Biotin synthase (352 aa).

One can recognise a Radical SAM core domain in the interval 44–262 (NRVQVSTLLS…LAVARILMPK (219 aa)). [4Fe-4S] cluster is bound by residues Cys-59, Cys-63, and Cys-66. [2Fe-2S] cluster is bound by residues Cys-103, Cys-134, Cys-194, and Arg-266.

The protein belongs to the radical SAM superfamily. Biotin synthase family. Homodimer. [4Fe-4S] cluster is required as a cofactor. Requires [2Fe-2S] cluster as cofactor.

The enzyme catalyses (4R,5S)-dethiobiotin + (sulfur carrier)-SH + 2 reduced [2Fe-2S]-[ferredoxin] + 2 S-adenosyl-L-methionine = (sulfur carrier)-H + biotin + 2 5'-deoxyadenosine + 2 L-methionine + 2 oxidized [2Fe-2S]-[ferredoxin]. It participates in cofactor biosynthesis; biotin biosynthesis; biotin from 7,8-diaminononanoate: step 2/2. In terms of biological role, catalyzes the conversion of dethiobiotin (DTB) to biotin by the insertion of a sulfur atom into dethiobiotin via a radical-based mechanism. The polypeptide is Biotin synthase (Pseudomonas entomophila (strain L48)).